The sequence spans 373 residues: Cytoplasmic tRNA 2-thiolation protein 1 (373 aa).

It belongs to the TtcA family. CTU1/NCS6/ATPBD3 subfamily.

The protein localises to the cytoplasm. The protein operates within tRNA modification; 5-methoxycarbonylmethyl-2-thiouridine-tRNA biosynthesis. Functionally, plays a central role in 2-thiolation of mcm(5)S(2)U at tRNA wobble positions of tRNA(Lys), tRNA(Glu) and tRNA(Gln). Directly binds tRNAs and probably acts by catalyzing adenylation of tRNAs, an intermediate required for 2-thiolation. It is unclear whether it acts as a sulfurtransferase that transfers sulfur from thiocarboxylated URM1 onto the uridine of tRNAs at wobble position. Prior mcm(5) tRNA modification by the elongator complex is required for 2-thiolation. May also be involved in protein urmylation. The polypeptide is Cytoplasmic tRNA 2-thiolation protein 1 (Eremothecium gossypii (strain ATCC 10895 / CBS 109.51 / FGSC 9923 / NRRL Y-1056) (Yeast)).